A 296-amino-acid polypeptide reads, in one-letter code: MKKVLLGFAAFTLSLSLAACSSNDSEKVSTEKETPQASTDVEKKTEQKESTKEKTADKSKEKDKKELVDVTLDRAVDGDTIKVTYNGNVDTVRYLLIDTPETKKPNSCVQPYGEDASKRNKELVNSGKLQLEFDKGDRRDKYGRLLAYVYVDGKSVQETLLKEGLARVAYVYEPNTKYIDQFKKDEQEAKSEKLSIWSKNGYVTDRGFNGCVKEKTTAVKKATTSKPAATQPTTPKASSETSTTTEKEASSETTGGTETFKNCTELRKKYPNGVPSSHPAYQSKMDRDHDNYACER.

The N-terminal stretch at Met-1 to Ala-19 is a signal peptide. Residue Cys-20 is the site of N-palmitoyl cysteine attachment. The S-diacylglycerol cysteine moiety is linked to residue Cys-20. The tract at residues Cys-20–Lys-65 is disordered. A compositionally biased stretch (basic and acidic residues) spans Asp-24–Lys-65. Residues Glu-66–Lys-199 enclose the TNase-like domain. Asp-79 contributes to the Ca(2+) binding site. Arg-93 is an active-site residue. Asp-98 and Thr-99 together coordinate Ca(2+). Catalysis depends on residues Glu-101 and Arg-144. Residues Ala-218–Arg-296 are disordered. Positions Val-219–Thr-244 are enriched in low complexity. The span at Lys-284–Arg-296 shows a compositional bias: basic and acidic residues.

Requires Ca(2+) as cofactor. It depends on Cu(2+) as a cofactor. Mn(2+) serves as cofactor.

The protein resides in the cell membrane. Its activity is regulated as follows. Inhibited by aurintricalboxylic acid but not by Zn(2+), Mn(2+), Hg(2+), 2-mercaptoethanol and sodium citrate. Neither inhibited nor activated by ATP. Functionally, catalyzes the hydrolysis of supercoiled double and single strand DNA and RNA. Involved in chromosomal DNA degradation and cell death caused by thermal stress. The polypeptide is SPbeta prophage-derived endonuclease YokF (yokF) (Bacillus subtilis (strain 168)).